A 544-amino-acid chain; its full sequence is Chaperonin GroEL 2 (544 aa).

Residues 29-32 (TLGP), 86-90 (DGTTT), G413, 479-481 (NAA), and D495 contribute to the ATP site.

It belongs to the chaperonin (HSP60) family. Forms a cylinder of 14 subunits composed of two heptameric rings stacked back-to-back. Interacts with the co-chaperonin GroES.

It localises to the cytoplasm. The catalysed reaction is ATP + H2O + a folded polypeptide = ADP + phosphate + an unfolded polypeptide.. Its function is as follows. Together with its co-chaperonin GroES, plays an essential role in assisting protein folding. The GroEL-GroES system forms a nano-cage that allows encapsulation of the non-native substrate proteins and provides a physical environment optimized to promote and accelerate protein folding. This is Chaperonin GroEL 2 from Prochlorococcus marinus subsp. pastoris (strain CCMP1986 / NIES-2087 / MED4).